A 278-amino-acid polypeptide reads, in one-letter code: Transmembrane protein 41B (278 aa).

The segment at 1-31 (MQVHERSHTGGHTCQCNHGSEKKAPATGKVH) is disordered. 6 helical membrane passes run 39–59 (MSLL…FLVY), 96–116 (FYVE…TFAI), 132–154 (FPLA…YLLS), 184–204 (LINY…FINI), 212–232 (PLKV…FVAI), and 249–269 (SWNS…PAIF). A VTT domain; required for its function in autophagy region spans residues 127–238 (GFLYPFPLAL…FVAIKAGTTL (112 aa)).

It belongs to the TMEM41 family.

It is found in the endoplasmic reticulum membrane. It localises to the endomembrane system. The catalysed reaction is a 1,2-diacyl-sn-glycero-3-phospho-L-serine(in) = a 1,2-diacyl-sn-glycero-3-phospho-L-serine(out). The enzyme catalyses cholesterol(in) = cholesterol(out). It carries out the reaction a 1,2-diacyl-sn-glycero-3-phosphocholine(in) = a 1,2-diacyl-sn-glycero-3-phosphocholine(out). It catalyses the reaction a 1,2-diacyl-sn-glycero-3-phosphoethanolamine(in) = a 1,2-diacyl-sn-glycero-3-phosphoethanolamine(out). Phospholipid scramblase involved in lipid homeostasis and membrane dynamics processes. Has phospholipid scramblase activity toward cholesterol and phosphatidylserine, as well as phosphatidylethanolamine and phosphatidylcholine. Required for autophagosome formation: participates in early stages of autophagosome biogenesis at the endoplasmic reticulum (ER) membrane by reequilibrating the leaflets of the ER as lipids are extracted by atg2 (atg2a or atg2b) to mediate autophagosome assembly. In addition to autophagy, involved in other processes in which phospholipid scramblase activity is required. Required for normal motor neuron development. This is Transmembrane protein 41B from Xenopus tropicalis (Western clawed frog).